The chain runs to 442 residues: 26S proteasome non-ATPase regulatory subunit 12 homolog B (442 aa).

The stretch at 1–129 (MEESRQLESS…KEEQGLIAEA (129 aa)) forms a coiled coil. Positions 232 to 403 (EICRSYKAIY…GIICFQIVKD (172 aa)) constitute a PCI domain.

It belongs to the proteasome subunit p55 family. Component of the 19S regulatory particle (RP/PA700) lid subcomplex of the 26S proteasome. The 26S proteasome is composed of a core protease (CP), known as the 20S proteasome, capped at one or both ends by the 19S regulatory particle (RP/PA700). The RP/PA700 complex is composed of at least 17 different subunits in two subcomplexes, the base and the lid, which form the portions proximal and distal to the 20S proteolytic core, respectively. Ubiquitous with highest expression in flowers.

It localises to the cytoplasm. Its subcellular location is the nucleus. Acts as a regulatory subunit of the 26 proteasome which is involved in the ATP-dependent degradation of ubiquitinated proteins. Acts redundantly with RPN5A. In Arabidopsis thaliana (Mouse-ear cress), this protein is 26S proteasome non-ATPase regulatory subunit 12 homolog B (RPN5B).